We begin with the raw amino-acid sequence, 70 residues long: DNA-binding transcriptional activator AlpA (70 aa).

The segment at residues 12–31 (LPAVIQKTGMARATIYDWLN) is a DNA-binding region (H-T-H motif).

In terms of biological role, positive regulator of the expression of the slpA gene. When overexpressed, leads to suppression of the capsule overproduction and UV sensitivity phenotypes of cells mutant for the Lon ATP-dependent protease. Part of the cryptic P4-like prophage CP4-57. Overexpression of AlpA leads to excision of the CP4-57 prophage by IntA. This inactivates ssrA (the gene upstream of the prophage) that encodes tmRNA which is required to rescue stalled ribosomes in a process known as trans-translation. This chain is DNA-binding transcriptional activator AlpA, found in Escherichia coli (strain K12).